The sequence spans 50 residues: Large ribosomal subunit protein bL33A (50 aa).

Belongs to the bacterial ribosomal protein bL33 family.

In Streptococcus thermophilus (strain CNRZ 1066), this protein is Large ribosomal subunit protein bL33A.